Consider the following 364-residue polypeptide: Fructose-1,6-bisphosphatase class 1 2 (364 aa).

Residues Glu-99, Asp-121, Leu-123, and Asp-124 each contribute to the Mg(2+) site. Substrate contacts are provided by residues 124–127 and Asn-220; that span reads DGSS. Glu-292 is a Mg(2+) binding site.

This sequence belongs to the FBPase class 1 family. As to quaternary structure, homotetramer. The cofactor is Mg(2+).

Its subcellular location is the cytoplasm. The enzyme catalyses beta-D-fructose 1,6-bisphosphate + H2O = beta-D-fructose 6-phosphate + phosphate. It functions in the pathway carbohydrate biosynthesis; gluconeogenesis. This chain is Fructose-1,6-bisphosphatase class 1 2, found in Polaromonas naphthalenivorans (strain CJ2).